The chain runs to 252 residues: Mediator of RNA polymerase II transcription subunit 8 (252 aa).

Residues 6–30 adopt a coiled-coil conformation; sequence QDQIKTLEQSRQRLVQLTRSLASLI. The tract at residues 170-252 is disordered; sequence RQLEDEDEEE…MTTGIPPTQR (83 aa). Over residues 173-196 the composition is skewed to acidic residues; that stretch reads EDEDEEESESESEEEGEGEEEEME.

It belongs to the Mediator complex subunit 8 family. In terms of assembly, component of the Mediator complex.

The protein resides in the nucleus. Component of the Mediator complex, a coactivator involved in the regulated transcription of nearly all RNA polymerase II-dependent genes. Mediator functions as a bridge to convey information from gene-specific regulatory proteins to the basal RNA polymerase II transcription machinery. Mediator is recruited to promoters by direct interactions with regulatory proteins and serves as a scaffold for the assembly of a functional preinitiation complex with RNA polymerase II and the general transcription factors. The chain is Mediator of RNA polymerase II transcription subunit 8 (med8) from Neosartorya fischeri (strain ATCC 1020 / DSM 3700 / CBS 544.65 / FGSC A1164 / JCM 1740 / NRRL 181 / WB 181) (Aspergillus fischerianus).